Here is a 273-residue protein sequence, read N- to C-terminus: MAVVNTSIPGLSGENPHYIPGYTGHCPLLRFSMGQTYGQVTGQLLRGPPGLAWPPAHRTLLPPIQSPRSPVISKGRLPPRRGHERLSSSIIPGYTGFIPRAQFIFAKNCNQVWAEAMSEFTRRHGEQESHQLPDGAKGEREVEEDQLREAEEPPLKQELAHASPYSMDDTDPHKFFMSGFTGYVPRARFLFGSSFPVLTNQALQEFGQMCSRGRAHKDPKPLSPLPRPTFQNLGLLPHYGGYVPGYKFQFGGTFGHLTHDALGLSITQKQLPA.

Disordered regions lie at residues 59-85 (TLLP…GHER) and 123-164 (RHGE…HASP). A compositionally biased stretch (basic and acidic residues) spans 123-159 (RHGEQESHQLPDGAKGEREVEEDQLREAEEPPLKQEL).

It belongs to the CIMIP2 family. Microtubule inner protein component of sperm flagellar doublet microtubules. Expressed in airway epithelial cells.

It localises to the cytoplasm. The protein localises to the cytoskeleton. Its subcellular location is the cilium axoneme. It is found in the flagellum axoneme. Its function is as follows. Microtubule inner protein (MIP) part of the dynein-decorated doublet microtubules (DMTs) in cilia axoneme, which is required for motile cilia beating. The sequence is that of Ciliary microtubule inner protein 2B (Cimip2b) from Mus musculus (Mouse).